The chain runs to 236 residues: C-&gt;U-editing enzyme APOBEC-1 (236 aa).

A CMP/dCMP-type deaminase domain is found at 10-134; sequence GDPTLRRRIE…QRNRQGLRDL (125 aa). A Zn(2+)-binding site is contributed by H61. The active-site Proton donor is the E63. The Zn(2+) site is built by C93 and C96.

It belongs to the cytidine and deoxycytidylate deaminase family. Homodimer. Interacts with A1CF; form an mRNA editing complex. Interacts with RBM47; form an mRNA editing complex. Found in a complex with CELF2/CUGBP2 and A1CF. Interacts with HNRPAB. Interacts with SYNCRIP. It depends on Zn(2+) as a cofactor.

The protein localises to the cytoplasm. It localises to the nucleus. It carries out the reaction a cytidine in mRNA + H2O + H(+) = a uridine in mRNA + NH4(+). The enzyme catalyses cytidine(6666) in apoB mRNA + H2O + H(+) = uridine(6666) in apoB mRNA + NH4(+). In terms of biological role, cytidine deaminase catalyzing the cytidine to uridine postranscriptional editing of a variety of mRNAs. Form complexes with cofactors that confer differential editing activity and selectivity. Responsible for the postranscriptional editing of a CAA codon for Gln to a UAA codon for stop in the apolipoprotein B mRNA. Also involved in CGA (Arg) to UGA (Stop) editing in the NF1 mRNA. May also play a role in the epigenetic regulation of gene expression by participating in DNA demethylation. In Pongo pygmaeus (Bornean orangutan), this protein is C-&gt;U-editing enzyme APOBEC-1.